The primary structure comprises 750 residues: Protein psiO (750 aa).

The N-terminal stretch at 1-22 is a signal peptide; it reads MKEKIKLSLLILTSIILAVANS. At 23 to 688 the chain is on the extracellular side; it reads QTQPKTLAMT…GCNTAAVVST (666 aa). N-linked (GlcNAc...) asparagine glycosylation occurs at Asn129. In terms of domain architecture, PA14 spans 140–286; that stretch reads QEYFPINGKG…DDYCGVCNGD (147 aa). Residues Asn447, Asn506, Asn554, Asn571, and Asn659 are each glycosylated (N-linked (GlcNAc...) asparagine). A helical membrane pass occupies residues 689–709; that stretch reads AVIAGVTVAAVVGLGIFLYGG. Over 710 to 750 the chain is Cytoplasmic; sequence KKGYDYYQDNKSKGMTGANSNPLYKESGNAGQNPLYNDNNL. A disordered region spans residues 727–750; sequence ANSNPLYKESGNAGQNPLYNDNNL. A compositionally biased stretch (polar residues) spans 738–750; the sequence is NAGQNPLYNDNNL.

It belongs to the prespore-cell-inducing factor family.

The protein localises to the membrane. This Dictyostelium discoideum (Social amoeba) protein is Protein psiO (psiO).